The sequence spans 230 residues: Cytidylate kinase (230 aa).

An ATP-binding site is contributed by 12-20; it reads GPSGAGKST.

Belongs to the cytidylate kinase family. Type 1 subfamily.

Its subcellular location is the cytoplasm. It catalyses the reaction CMP + ATP = CDP + ADP. The catalysed reaction is dCMP + ATP = dCDP + ADP. In Corynebacterium diphtheriae (strain ATCC 700971 / NCTC 13129 / Biotype gravis), this protein is Cytidylate kinase.